The sequence spans 369 residues: Arsenite methyltransferase (369 aa).

Ser46 carries the post-translational modification Phosphoserine.

The protein belongs to the methyltransferase superfamily. Arsenite methyltransferase family.

Its subcellular location is the cytoplasm. It is found in the cytosol. It catalyses the reaction arsenic triglutathione + [thioredoxin]-dithiol + S-adenosyl-L-methionine + 2 H2O = methylarsonous acid + [thioredoxin]-disulfide + 3 glutathione + S-adenosyl-L-homocysteine + H(+). The enzyme catalyses arsenic triglutathione + 2 [thioredoxin]-dithiol + 2 S-adenosyl-L-methionine + H2O = dimethylarsinous acid + 2 [thioredoxin]-disulfide + 3 glutathione + 2 S-adenosyl-L-homocysteine + 2 H(+). It carries out the reaction arsenic triglutathione + 3 [thioredoxin]-dithiol + 3 S-adenosyl-L-methionine = trimethylarsine + 3 [thioredoxin]-disulfide + 3 glutathione + 3 S-adenosyl-L-homocysteine + 3 H(+). Catalyzes the transfer of a methyl group from AdoMet to trivalent arsenicals producing methylated and dimethylated arsenicals. It methylates arsenite to form methylarsonate, Me-AsO(3)H(2), which is reduced by methylarsonate reductase to methylarsonite, Me-As(OH)2. Methylarsonite is also a substrate and it is converted into the much less toxic compound dimethylarsinate (cacodylate), Me(2)As(O)-OH. This chain is Arsenite methyltransferase (As3mt), found in Rattus norvegicus (Rat).